A 204-amino-acid chain; its full sequence is Phosphoribosyl-dephospho-CoA transferase (204 aa).

Active-site residues include Asp-129 and Asp-131.

The protein belongs to the MdcG family.

The catalysed reaction is apo-[malonate decarboxylase ACP] + 2'-(5''-triphospho-alpha-D-ribosyl)-3'-dephospho-CoA = holo-[malonate decarboxylase ACP] + diphosphate. Functionally, transfers 2'-(5-triphosphoribosyl)-3'-dephosphocoenzyme-A to the apo-[acyl-carrier-protein] of the malonate decarboxylase to yield holo-[acyl-carrier-protein]. The chain is Phosphoribosyl-dephospho-CoA transferase from Pseudomonas putida (strain W619).